A 169-amino-acid chain; its full sequence is Ubiquitin-conjugating enzyme E2 2 (169 aa).

The 147-residue stretch at 4–150 folds into the UBC core domain; the sequence is AAKRRLIRDF…VKKTVELSWV (147 aa). Cys88 functions as the Glycyl thioester intermediate in the catalytic mechanism.

This sequence belongs to the ubiquitin-conjugating enzyme family.

The protein localises to the cytoplasm. It localises to the nucleus. The catalysed reaction is S-ubiquitinyl-[E1 ubiquitin-activating enzyme]-L-cysteine + [E2 ubiquitin-conjugating enzyme]-L-cysteine = [E1 ubiquitin-activating enzyme]-L-cysteine + S-ubiquitinyl-[E2 ubiquitin-conjugating enzyme]-L-cysteine.. The protein operates within protein modification; protein ubiquitination. In terms of biological role, catalyzes the covalent attachment of ubiquitin to other proteins. Plays a role in transcription regulation by catalyzing the monoubiquitination of histone H2B to form H2BK123ub1. H2BK123ub1 gives a specific tag for epigenetic transcriptional activation and is also a prerequisite for H3K4me and H3K79me formation. Also involved in postreplication repair of UV-damaged DNA, in N-end rule-dependent protein degradation and in sporulation. The sequence is that of Ubiquitin-conjugating enzyme E2 2 (UBC2) from Cryptococcus neoformans var. neoformans serotype D (strain B-3501A) (Filobasidiella neoformans).